We begin with the raw amino-acid sequence, 110 residues long: Large ribosomal subunit protein uL22 (110 aa).

This sequence belongs to the universal ribosomal protein uL22 family. In terms of assembly, part of the 50S ribosomal subunit.

This protein binds specifically to 23S rRNA; its binding is stimulated by other ribosomal proteins, e.g. L4, L17, and L20. It is important during the early stages of 50S assembly. It makes multiple contacts with different domains of the 23S rRNA in the assembled 50S subunit and ribosome. Its function is as follows. The globular domain of the protein is located near the polypeptide exit tunnel on the outside of the subunit, while an extended beta-hairpin is found that lines the wall of the exit tunnel in the center of the 70S ribosome. The chain is Large ribosomal subunit protein uL22 from Pasteurella multocida (strain Pm70).